The primary structure comprises 448 residues: Cytoplasmic tRNA 2-thiolation protein 2 (448 aa).

This sequence belongs to the CTU2/NCS2 family.

It localises to the cytoplasm. The protein operates within tRNA modification; 5-methoxycarbonylmethyl-2-thiouridine-tRNA biosynthesis. Plays a central role in 2-thiolation of mcm(5)S(2)U at tRNA wobble positions of tRNA(Lys), tRNA(Glu) and tRNA(Gln). May act by forming a heterodimer with NCS6 that ligates sulfur from thiocarboxylated URM1 onto the uridine of tRNAs at wobble position. Prior mcm(5) tRNA modification by the elongator complex is required for 2-thiolation. May also be involved in protein urmylation. This Scheffersomyces stipitis (strain ATCC 58785 / CBS 6054 / NBRC 10063 / NRRL Y-11545) (Yeast) protein is Cytoplasmic tRNA 2-thiolation protein 2.